We begin with the raw amino-acid sequence, 234 residues long: HTH-type transcriptional regulator ArcR (234 aa).

40-129 (VRHYTKGQVI…MAFLCKANDD (90 aa)) is a binding site for a nucleoside 3',5'-cyclic phosphate. Positions 155-228 (KFAKDRIIKL…HKNWLVSKHL (74 aa)) constitute an HTH crp-type domain. The segment at residues 188–207 (IQLMSDMAGISRETAGHIIH) is a DNA-binding region (H-T-H motif).

The protein localises to the cytoplasm. Positively regulates the expression of the arcABDCR operon under anaerobic conditions, thus playing an essential role in arginine catabolism. May also control the expression of genes encoding proteins which are involved in anaerobic metabolism. Can bind cyclic AMP. This is HTH-type transcriptional regulator ArcR (arcR) from Staphylococcus aureus (strain USA300 / TCH1516).